The primary structure comprises 480 residues: Iron-sulfur cluster assembly SufBD family protein slr0074 (480 aa).

This sequence belongs to the iron-sulfur cluster assembly SufBD family.

The sequence is that of Iron-sulfur cluster assembly SufBD family protein slr0074 from Synechocystis sp. (strain ATCC 27184 / PCC 6803 / Kazusa).